The following is a 139-amino-acid chain: MFVKSLVFLTIAVAYASADCLHCICMRESGCKPIGCNMDVGSLSCGYYQIKLPYYEDCGQPTKKSGETTEAAWKRCANDLSCATTCVENYYNRYKSQCAGTGQGACEVMARNHNGGPQGCKHSGTLGYWNGIKSCCGCS.

The N-terminal stretch at 1–18 is a signal peptide; it reads MFVKSLVFLTIAVAYASA. The I-type lysozyme domain maps to 19 to 138; sequence DCLHCICMRE…WNGIKSCCGC (120 aa). 7 cysteine pairs are disulfide-bonded: cysteine 20–cysteine 106, cysteine 23–cysteine 138, cysteine 25–cysteine 31, cysteine 36–cysteine 45, cysteine 58–cysteine 86, cysteine 76–cysteine 82, and cysteine 98–cysteine 120. The active-site Proton donor is the glutamate 28. Aspartate 39 (nucleophile) is an active-site residue. Position 51–57 (51–57) interacts with substrate; that stretch reads KLPYYED. Substrate is bound by residues tyrosine 90 and 113–115; that span reads HNG.

The protein belongs to the glycosyl hydrolase 22 family. Type-I lysozyme subfamily. Expressed in pharynx grinder muscle pm7, isthmus marginal cell mc2 and pharyngeal muscle cell pm5, intestinal cells and at lower levels in coelomocytes and epidermis. Expressed at low levels in intestine.

Its subcellular location is the late endosome lumen. It is found in the recycling endosome lumen. It localises to the lysosome lumen. The protein localises to the secreted. The catalysed reaction is Hydrolysis of (1-&gt;4)-beta-linkages between N-acetylmuramic acid and N-acetyl-D-glucosamine residues in a peptidoglycan and between N-acetyl-D-glucosamine residues in chitodextrins.. Has bacteriolytic activity against Gram-positive bacteria. Plays a role in defense against bacterial pathogens. Involved in pharyngeal grinder function by enabling proper lysis of ingested bacteria. The sequence is that of Invertebrate-type lysozyme 3 from Caenorhabditis elegans.